A 173-amino-acid chain; its full sequence is VQ motif-containing protein 31 (173 aa).

A VQ motif is present at residues F27–G36. A Phosphothreonine modification is found at T46. Disordered stretches follow at residues E76 to V105 and L143 to P173. Residues P86–V105 are compositionally biased toward polar residues. Phosphoserine occurs at positions 92, 103, 146, and 149. Over residues T154 to T165 the composition is skewed to low complexity. The residue at position 165 (T165) is a Phosphothreonine. A phosphoserine mark is found at S166 and S170.

In terms of processing, phosphorylated on serine and threonine residues by MPK6.

The protein localises to the nucleus. May modulate WRKY transcription factor activities. This Arabidopsis thaliana (Mouse-ear cress) protein is VQ motif-containing protein 31.